Here is a 276-residue protein sequence, read N- to C-terminus: Large ribosomal subunit protein uL2 (276 aa).

Residues 219-276 form a disordered region; that stretch reads TVRGSAMNPNDHPHGGGEGRSPIGRPSPVTPWGKPALGYKTRKKNKHSDKFIVTGRKR.

The protein belongs to the universal ribosomal protein uL2 family. In terms of assembly, part of the 50S ribosomal subunit. Forms a bridge to the 30S subunit in the 70S ribosome.

In terms of biological role, one of the primary rRNA binding proteins. Required for association of the 30S and 50S subunits to form the 70S ribosome, for tRNA binding and peptide bond formation. It has been suggested to have peptidyltransferase activity; this is somewhat controversial. Makes several contacts with the 16S rRNA in the 70S ribosome. This is Large ribosomal subunit protein uL2 from Alkaliphilus metalliredigens (strain QYMF).